A 92-amino-acid chain; its full sequence is Large ribosomal subunit protein uL23c (92 aa).

The protein belongs to the universal ribosomal protein uL23 family. Part of the 50S ribosomal subunit.

The protein resides in the plastid. Its subcellular location is the chloroplast. Binds to 23S rRNA. The polypeptide is Large ribosomal subunit protein uL23c (rpl23) (Mesostigma viride (Green alga)).